The sequence spans 987 residues: MATTSEINNDLSFSVVSIVEDVLQQHSSRSSDVGLVSRKVEESSLRRYEAAGWLRDMIGVSNGKDFPGEPSEEEFRLGLRSGIVLCNVLNKVNPGSVSKVVEAPDDVADGAALSAFQYFENIRNFLVAIEEMGLPSFEASDMEKGGKSIRIVNCILALKSYSEWKLKGENGPWRYGSNMKHNFGSRKLFLRKSSEPFVSSISRTQSTDMLSTDQPLSSDGDSRSINGLVRSFIADRKHEDIPNVVESVLNKVMEEVQQRLSIHNEMMKSSSKPIPEDDSSCETVVRSQLCDARQHEEAEENSPPQVVEKKFQRTNFEHHEEQKILLNQQKHIQELKQTLYTTKAGMKLLQMKYQEDFFHLGKHLNGLAYAATGYKRVLEENRKLYNLVQDLKGNIRVYCRVRPFLPGQESGGLSAVEDIDEGTITIRVPSKYGKAGQKPFMFNKVFGPSATQEEVFSDMQPLVRSVLDGYNVCIFAYGQTGSGKTFTMTGPKELTEESLGVNYRALADLFLLSNQRKDTTSYEISVQMLEIYNEQVRDLLAQDGQTKRLEIRNNSHNGINVPEASLVPVSSTDDVIQLMDLGHMNRAVSSTAMNDRSSRSHSCVTVHVQGRDLTSGSILHGSMHLVDLAGSERVDKSEVTGDRLKEAQHINKSLSALGDVISSLSQKTSHVPYRNSKLTQLLQDSLGGSAKTLMFVHISPEPDTLGETISTLKFAERVGSVELGAARVNKDNSEVKELKEQIANLKMALVRKGNGNDVQPTAIPINRERISRRRSLETPTIRPKLPTMGNTSNNSRPQIMDLSGPEAFNDSTASSRRHSLDIHELMKSSSPAWPRQPLNGKDEDRESKSGEWIDKHEELIQNQNPNSPEQFYQSMVPQQQSLYGGKQDFEVQSITDNESDEAATSDCSDSDLLWRLSVQVNVPKVSNIQNSANPKPKKIQPRTAKLSETRSLIPSLIPAPSKRPPNTVNSQPQRPTRDGKRRLSLGT.

The region spanning 44-163 (SLRRYEAAGW…CILALKSYSE (120 aa)) is the Calponin-homology (CH) domain. Positions 201–221 (ISRTQSTDMLSTDQPLSSDGD) are disordered. A Kinesin motor domain is found at 394 to 721 (NIRVYCRVRP…LKFAERVGSV (328 aa)). ATP is bound at residue 478–485 (GQTGSGKT). Positions 725 to 754 (AARVNKDNSEVKELKEQIANLKMALVRKGN) form a coiled coil. 2 disordered regions span residues 759-849 (QPTA…ESKS) and 927-987 (NIQN…SLGT). Positions 788–797 (MGNTSNNSRP) are enriched in polar residues. Basic and acidic residues predominate over residues 840-849 (GKDEDRESKS). The segment covering 964 to 974 (PPNTVNSQPQR) has biased composition (polar residues).

It belongs to the TRAFAC class myosin-kinesin ATPase superfamily. Kinesin family. KIN-14 subfamily. As to quaternary structure, monomer. In terms of tissue distribution, flower specific.

Its subcellular location is the cytoplasm. It localises to the cytoskeleton. Its function is as follows. Microtubule-binding motor protein. The protein is Kinesin-like protein KIN-14G of Arabidopsis thaliana (Mouse-ear cress).